A 58-amino-acid chain; its full sequence is U11-ctenitoxin-Pn1b (58 aa).

5 cysteine pairs are disulfide-bonded: Cys-2–Cys-16, Cys-9–Cys-22, Cys-15–Cys-40, Cys-24–Cys-38, and Cys-48–Cys-55.

As to expression, expressed by the venom gland.

The protein localises to the secreted. Functionally, non-toxic to mice. This Phoneutria nigriventer (Brazilian armed spider) protein is U11-ctenitoxin-Pn1b.